The sequence spans 111 residues: MKGSKSHLVFTLLQVSQLNVFLFFLGFLLPLFLGLFVSLRSLALALSSGWFIMDLILFRTFPEAELYPAVIGKPSGLGLTEAFEFISIFFPDVQQTERNIKYNWERCFNGE.

A run of 2 helical transmembrane segments spans residues 18 to 38 (LNVFLFFLGFLLPLFLGLFVS) and 42 to 62 (LALALSSGWFIMDLILFRTFP).

Its subcellular location is the membrane. This is an uncharacterized protein from Saccharomyces cerevisiae (strain ATCC 204508 / S288c) (Baker's yeast).